The primary structure comprises 171 residues: Lipoprotein signal peptidase (171 aa).

3 helical membrane-spanning segments follow: residues 8-28 (SFLW…YIVV), 64-84 (WQQY…VYFL), and 96-118 (SAYA…NGFV). Active-site residues include Asp120 and Asp138. A helical transmembrane segment spans residues 133–153 (VFNIADIAICIGAGLLALDAF).

It belongs to the peptidase A8 family.

The protein localises to the cell inner membrane. The enzyme catalyses Release of signal peptides from bacterial membrane prolipoproteins. Hydrolyzes -Xaa-Yaa-Zaa-|-(S,diacylglyceryl)Cys-, in which Xaa is hydrophobic (preferably Leu), and Yaa (Ala or Ser) and Zaa (Gly or Ala) have small, neutral side chains.. It participates in protein modification; lipoprotein biosynthesis (signal peptide cleavage). Functionally, this protein specifically catalyzes the removal of signal peptides from prolipoproteins. This Haemophilus influenzae (strain 86-028NP) protein is Lipoprotein signal peptidase.